A 241-amino-acid chain; its full sequence is NAD(P)H-quinone oxidoreductase subunit K (241 aa).

[4Fe-4S] cluster is bound by residues Cys-60, Cys-61, Cys-125, and Cys-156. Positions 220–241 (SSQKEKITELPEKTEITNTEKD) are disordered. Basic and acidic residues predominate over residues 222-241 (QKEKITELPEKTEITNTEKD).

The protein belongs to the complex I 20 kDa subunit family. As to quaternary structure, NDH-1 can be composed of about 15 different subunits; different subcomplexes with different compositions have been identified which probably have different functions. It depends on [4Fe-4S] cluster as a cofactor.

The protein localises to the cellular thylakoid membrane. The enzyme catalyses a plastoquinone + NADH + (n+1) H(+)(in) = a plastoquinol + NAD(+) + n H(+)(out). It catalyses the reaction a plastoquinone + NADPH + (n+1) H(+)(in) = a plastoquinol + NADP(+) + n H(+)(out). Functionally, NDH-1 shuttles electrons from an unknown electron donor, via FMN and iron-sulfur (Fe-S) centers, to quinones in the respiratory and/or the photosynthetic chain. The immediate electron acceptor for the enzyme in this species is believed to be plastoquinone. Couples the redox reaction to proton translocation, and thus conserves the redox energy in a proton gradient. Cyanobacterial NDH-1 also plays a role in inorganic carbon-concentration. This Prochlorococcus marinus (strain MIT 9215) protein is NAD(P)H-quinone oxidoreductase subunit K.